The primary structure comprises 183 residues: Phospholipase A2 inhibitor gamma subunit A1 (183 aa).

Disulfide bonds link C3–C28, C6–C13, C21–C49, C55–C76, C77–C82, C100–C125, C118–C147, and C151–C173. N-linked (GlcNAc...) asparagine glycosylation occurs at N158.

It belongs to the CNF-like-inhibitor family. Heterodimer of subunit A and subunit B. Expressed by the liver.

Its subcellular location is the secreted. Phospholipase A2 (PA2) inhibitor. Inhibits the enzymatic activity of PA2 of Deinagkistrodon acutus. Also shows a wide anti-hemorrhage activities to D.acutus, Naja atra and Agkistrodon halys venom. The native protein is more potent than the recombinant one. In Trimerodytes annularis (Red-bellied annulate keelback), this protein is Phospholipase A2 inhibitor gamma subunit A1.